The following is a 170-amino-acid chain: CASP-like protein 1F1 (170 aa).

Residues 1 to 16 lie on the Cytoplasmic side of the membrane; that stretch reads MMGDNEGRRTPLLNLG. The chain crosses the membrane as a helical span at residues 17–37; the sequence is VQVSMRVLTIGAAMASMWVMI. The Extracellular segment spans residues 38–62; it reads TNREVASVYGIAFEAKYSYSSAFRY. Residues 63–83 form a helical membrane-spanning segment; sequence LVYAQIAVCAATLFTLVWACL. The Cytoplasmic portion of the chain corresponds to 84–88; it reads AVRRR. A helical membrane pass occupies residues 89–109; it reads GLVFALFFFDLLTTLTAISAF. The Extracellular segment spans residues 110-141; it reads SAAFAEGYVGKYGNKQAGWLPICGYVHGYCSR. A helical transmembrane segment spans residues 142–162; the sequence is VTISLAMSFASFILLFILTVL. Over 163–170 the chain is Cytoplasmic; that stretch reads TASAARHY.

Belongs to the Casparian strip membrane proteins (CASP) family. In terms of assembly, homodimer and heterodimers. In flowers, expressed in the anther wall.

Its subcellular location is the cell membrane. The chain is CASP-like protein 1F1 from Arabidopsis thaliana (Mouse-ear cress).